The primary structure comprises 601 residues: MQNELLDDPMDTGAPAAEAAAADEPLPPAHGIDREVTPKPAGNPDLMQQSLDNPAIPMHLIEKRDDRRESCDDGYSLTVNESAIDIESLACSYDSNAFFLRARFIARHCPILRADAYISLINYLKEHTTDITHYVAFFNELESELARKEFKNRQLNFQIPLRDQKWIEENGATWQSTTDQLQAEYKRHKDEGVKESTRRAMEDLFQHYMMAGKIDEAIRLYSRGIRDYCTQLKHSINMWINWMEVAICANDWGKLDTVTNTAYRSLKDADDAEKNSQQSQQAPPQRGENAPYMVERDPNAPIQTLTNRQLIETALAKCLAAQVLLKLRNKRYSQVVETILQIKTECLQSKWFVTSSDLGIYGMLSAMATMSRADLKLQVSGNGTFRKLLESEPQLIELLGSYTSSRFGRCFEIMRSVKPRLLLDPFISRNVDELFEKIRQKCVLQYLQPYSTIKMATMAEAVGMSSAELQLSLLELIEQKHVSLKIDQNEGIVRILDERDENAILKRVNVTCDRATQKAKSLLWKTTLAGANIHSISDKETRPKRKNQKESAKFDRNFGGIDVDEDPRGIAGPSGLSDDFNIAYDQQPQQQVQYLEDLGDI.

Acidic residues predominate over residues 1–10 (MQNELLDDPM). Disordered stretches follow at residues 1 to 54 (MQNE…LDNP) and 268 to 294 (DADD…PYMV). A compositionally biased stretch (low complexity) spans 14-24 (APAAEAAAADE). Residues 338-500 (TILQIKTECL…GIVRILDERD (163 aa)) form the PCI domain. Residues 535–581 (SISDKETRPKRKNQKESAKFDRNFGGIDVDEDPRGIAGPSGLSDDFN) are disordered.

Belongs to the CSN1 family. In terms of assembly, component of the CSN complex, probably composed of csn-1, csn-2, csn-3, csn-4, csn-5, csn-6 and csn-7. Within the complex it probably interacts directly with csn-2, csn-4 and csn-5. May interact with itself. Interacts with rbx-1.

It is found in the cytoplasm. Its subcellular location is the nucleus. Its function is as follows. Essential component of the COP9 signalosome complex (CSN), a complex involved in various cellular and developmental processes. The CSN complex is an essential regulator of the ubiquitin (Ubl) conjugation pathway by mediating the deneddylation of the cullin subunits of the SCF-type E3 ligase complexes, leading to decrease the Ubl ligase activity of SCF. The CSN complex plays an essential role in embryogenesis and oogenesis and is required to regulate microtubule stability in the early embryo. Mediates mei-3/katanin targeting for degradation at the meiosis to mitosis transition via deneddylation of cul-3. The sequence is that of COP9 signalosome complex subunit 1 (csn-1) from Caenorhabditis elegans.